Consider the following 637-residue polypeptide: Early transcription factor 70 kDa subunit (637 aa).

The Helicase ATP-binding domain occupies 32 to 185 (RTIIDENRSV…GHIIDLMSEE (154 aa)). 45–52 (HIMGSGKT) serves as a coordination point for ATP. Positions 135 to 138 (DKAH) match the DEXH box motif. The region spanning 327-507 (KFKYFINRIQ…VLPFDIKKLL (181 aa)) is the Helicase C-terminal domain.

The protein belongs to the helicase family. VETF subfamily. As to quaternary structure, heterodimer of a 70 kDa and a 82 kDa subunit. Part of the early transcription complex composed of ETF, RAP94/OPG109, and the DNA-directed RNA polymerase.

It is found in the virion. Acts with RNA polymerase to initiate transcription from early gene promoters. Is recruited by the RPO-associated protein of 94 kDa RAP94/OPG109 to form the early transcription complex, which also contains the core RNA polymerase. ETF heterodimer binds to early gene promoters. The chain is Early transcription factor 70 kDa subunit (OPG118) from Homo sapiens (Human).